Consider the following 419-residue polypeptide: Peptide chain release factor subunit 1 (419 aa).

It belongs to the eukaryotic release factor 1 family. In terms of assembly, heterodimer of two subunits, one of which binds GTP.

The protein resides in the cytoplasm. Its function is as follows. Directs the termination of nascent peptide synthesis (translation) in response to the termination codons UAA, UAG and UGA. This is Peptide chain release factor subunit 1 from Methanococcus maripaludis (strain C5 / ATCC BAA-1333).